The primary structure comprises 173 residues: Sialic acid TRAP transporter small permease protein SiaQ (173 aa).

4 helical membrane-spanning segments follow: residues 13-33, 46-66, 87-107, and 123-143; these read IEEIITVPLMAALLAVLTWQI, SEELARLLFMYMCLVGCAIAI, LSLVLSLEIAVLVSIGAIIVL, and LGISSSWMNYSLPVGGVFMVF.

Belongs to the TRAP transporter small permease family. As to quaternary structure, the complex comprises the extracytoplasmic solute receptor protein SiaP, and the two transmembrane proteins SiaQ and SiaM. SiaQ and SiaM form a tight 1:1 complex.

It localises to the cell inner membrane. Functionally, part of the tripartite ATP-independent periplasmic (TRAP) transport system SiaPQM that catalyzes unidirectional Na(+)-dependent sialic acid uptake. The protein is Sialic acid TRAP transporter small permease protein SiaQ of Vibrio cholerae serotype O1 (strain ATCC 39315 / El Tor Inaba N16961).